The primary structure comprises 522 residues: ATP synthase subunit alpha (522 aa).

176-183 (GDRQTGKT) provides a ligand contact to ATP.

Belongs to the ATPase alpha/beta chains family. As to quaternary structure, F-type ATPases have 2 components, CF(1) - the catalytic core - and CF(0) - the membrane proton channel. CF(1) has five subunits: alpha(3), beta(3), gamma(1), delta(1), epsilon(1). CF(0) has four main subunits: a(1), b(1), b'(1) and c(9-12).

The protein localises to the cell membrane. It carries out the reaction ATP + H2O + 4 H(+)(in) = ADP + phosphate + 5 H(+)(out). Functionally, produces ATP from ADP in the presence of a proton gradient across the membrane. The alpha chain is a regulatory subunit. The protein is ATP synthase subunit alpha of Chloroflexus aurantiacus (strain ATCC 29366 / DSM 635 / J-10-fl).